The chain runs to 105 residues: MELTRVILHPYTTEKTYSIRNKSEHETLTFIVDKNANKYQIREAFIAIFGLKPLKIRTTNRRPAKIRTSTARPGYTKAKKIAYVVMPVGVKVAVSKEEVEAANAK.

It belongs to the universal ribosomal protein uL23 family. In terms of assembly, part of the 50S ribosomal subunit. Contacts protein L29, and trigger factor when it is bound to the ribosome.

Functionally, one of the early assembly proteins it binds 23S rRNA. One of the proteins that surrounds the polypeptide exit tunnel on the outside of the ribosome. Forms the main docking site for trigger factor binding to the ribosome. This is Large ribosomal subunit protein uL23 from Ureaplasma parvum serovar 3 (strain ATCC 27815 / 27 / NCTC 11736).